Here is a 189-residue protein sequence, read N- to C-terminus: Copper transport protein CTR2 (189 aa).

The Cytoplasmic segment spans residues 1–81 (MDDKKTWSTV…VVFEWWHIKT (81 aa)). A helical transmembrane segment spans residues 82–102 (LPGLILSCLAIFGLAYLYEYL). Residues 103–142 (KYCVHKRQLSQRVLLPNRSLTKINQADKVSNSILYGLQVG) are Vacuolar-facing. The helical transmembrane segment at 143–163 (FSFMLMLVFMTYNGWLMLAVV) threads the bilayer. The Cytoplasmic portion of the chain corresponds to 164 to 189 (CGAIWGNYSWCTSYSPEIDDSSLACH).

Belongs to the copper transporter (Ctr) (TC 1.A.56) family. SLC31A subfamily. Homomultimer.

It is found in the vacuole membrane. Provides bioavailable copper via mobilization of vacuolar copper stores and export to the cytoplasm. The protein is Copper transport protein CTR2 (CTR2) of Saccharomyces cerevisiae (strain ATCC 204508 / S288c) (Baker's yeast).